A 589-amino-acid polypeptide reads, in one-letter code: Cyclohexane-1,2-dione hydrolase (589 aa).

Glutamate 52 serves as a coordination point for thiamine diphosphate. The segment at 400–480 (NHTLPMFGGA…VITMVFTNES (81 aa)) is thiamine pyrophosphate binding. Mg(2+) contacts are provided by aspartate 451 and asparagine 478.

The protein belongs to the TPP enzyme family. As to quaternary structure, homodimer. It depends on Mg(2+) as a cofactor. Requires thiamine diphosphate as cofactor. FAD is required as a cofactor.

The enzyme catalyses cyclohexan-1,2-dione + H2O = 6-oxohexanoate + H(+). Functionally, catalyzes the ring-opening cleavage of the alicyclic alcohol cyclohexane-1,2-dione. This Azoarcus sp protein is Cyclohexane-1,2-dione hydrolase.